Here is a 128-residue protein sequence, read N- to C-terminus: Keratin-associated protein 21-1 (128 aa).

Positions 11–117 (GGCGYGSRYG…RYGCGYGSGC (107 aa)) are 51 X 2 AA repeats of G-[YCGS].

This sequence belongs to the KRTAP type 21 family. Interacts with hair keratins. As to expression, strong expression in narrowly defined pattern restricted to the lower and middle cortical regions of the hair shaft in both developing and cycling hair. During hair follicle regression (catagen), expression levels decrease until expression is no longer detectable in follicles at resting stage (telogen).

Functionally, in the hair cortex, hair keratin intermediate filaments are embedded in an interfilamentous matrix, consisting of hair keratin-associated proteins (KRTAP), which are essential for the formation of a rigid and resistant hair shaft through their extensive disulfide bond cross-linking with abundant cysteine residues of hair keratins. The matrix proteins include the high-sulfur and high-glycine-tyrosine keratins. This is Keratin-associated protein 21-1 (Krtap21-1) from Mus musculus (Mouse).